Consider the following 132-residue polypeptide: Glycine cleavage system H protein (132 aa).

In terms of domain architecture, Lipoyl-binding spans 24–106; the sequence is IATIGLSAFA…YGDGWLIKVR (83 aa). Position 65 is an N6-lipoyllysine (K65).

Belongs to the GcvH family. In terms of assembly, the glycine cleavage system is composed of four proteins: P, T, L and H. (R)-lipoate is required as a cofactor.

In terms of biological role, the glycine cleavage system catalyzes the degradation of glycine. The H protein shuttles the methylamine group of glycine from the P protein to the T protein. The polypeptide is Glycine cleavage system H protein (Rippkaea orientalis (strain PCC 8801 / RF-1) (Cyanothece sp. (strain PCC 8801))).